The primary structure comprises 1375 residues: DNA-directed RNA polymerase subunit beta (1375 aa).

It belongs to the RNA polymerase beta chain family. In terms of assembly, the RNAP catalytic core consists of 2 alpha, 1 beta, 1 beta' and 1 omega subunit. When a sigma factor is associated with the core the holoenzyme is formed, which can initiate transcription.

It catalyses the reaction RNA(n) + a ribonucleoside 5'-triphosphate = RNA(n+1) + diphosphate. Functionally, DNA-dependent RNA polymerase catalyzes the transcription of DNA into RNA using the four ribonucleoside triphosphates as substrates. In Methylorubrum populi (strain ATCC BAA-705 / NCIMB 13946 / BJ001) (Methylobacterium populi), this protein is DNA-directed RNA polymerase subunit beta.